A 455-amino-acid chain; its full sequence is Ribulose bisphosphate carboxylase large chain (455 aa).

Lys-5 carries the N6,N6,N6-trimethyllysine modification. Residues Asn-114 and Thr-164 each contribute to the substrate site. The active-site Proton acceptor is the Lys-166. Substrate is bound at residue Lys-168. Mg(2+) is bound by residues Lys-192, Asp-194, and Glu-195. Lys-192 carries the post-translational modification N6-carboxylysine. His-285 acts as the Proton acceptor in catalysis. Arg-286, His-318, and Ser-370 together coordinate substrate.

This sequence belongs to the RuBisCO large chain family. Type I subfamily. In terms of assembly, heterohexadecamer of 8 large chains and 8 small chains; disulfide-linked. The disulfide link is formed within the large subunit homodimers. Requires Mg(2+) as cofactor. In terms of processing, the disulfide bond which can form in the large chain dimeric partners within the hexadecamer appears to be associated with oxidative stress and protein turnover.

It is found in the plastid. The protein localises to the chloroplast. The catalysed reaction is 2 (2R)-3-phosphoglycerate + 2 H(+) = D-ribulose 1,5-bisphosphate + CO2 + H2O. It carries out the reaction D-ribulose 1,5-bisphosphate + O2 = 2-phosphoglycolate + (2R)-3-phosphoglycerate + 2 H(+). RuBisCO catalyzes two reactions: the carboxylation of D-ribulose 1,5-bisphosphate, the primary event in carbon dioxide fixation, as well as the oxidative fragmentation of the pentose substrate in the photorespiration process. Both reactions occur simultaneously and in competition at the same active site. The protein is Ribulose bisphosphate carboxylase large chain of Lupinus paraguariensis (Lupine).